Reading from the N-terminus, the 459-residue chain is Exodeoxyribonuclease 7 large subunit (459 aa).

This sequence belongs to the XseA family. Heterooligomer composed of large and small subunits.

It localises to the cytoplasm. The enzyme catalyses Exonucleolytic cleavage in either 5'- to 3'- or 3'- to 5'-direction to yield nucleoside 5'-phosphates.. In terms of biological role, bidirectionally degrades single-stranded DNA into large acid-insoluble oligonucleotides, which are then degraded further into small acid-soluble oligonucleotides. The polypeptide is Exodeoxyribonuclease 7 large subunit (Pseudomonas putida (strain ATCC 47054 / DSM 6125 / CFBP 8728 / NCIMB 11950 / KT2440)).